Consider the following 476-residue polypeptide: Sulfate adenylyltransferase subunit 1 (476 aa).

The region spanning 17 to 232 (KDLLRLLTAG…LETVHIDSDN (216 aa)) is the tr-type G domain. Residues 26–33 (GSVDDGKS) are G1. Position 26-33 (26-33 (GSVDDGKS)) interacts with GTP. A G2 region spans residues 84–88 (GITID). A G3 region spans residues 105 to 108 (DTPG). Residues 105 to 109 (DTPGH) and 160 to 163 (NKMD) contribute to the GTP site. The interval 160-163 (NKMD) is G4. The segment at 197–199 (SAL) is G5.

It belongs to the TRAFAC class translation factor GTPase superfamily. Classic translation factor GTPase family. CysN/NodQ subfamily. As to quaternary structure, heterodimer composed of CysD, the smaller subunit, and CysN.

The enzyme catalyses sulfate + ATP + H(+) = adenosine 5'-phosphosulfate + diphosphate. It participates in sulfur metabolism; hydrogen sulfide biosynthesis; sulfite from sulfate: step 1/3. In terms of biological role, with CysD forms the ATP sulfurylase (ATPS) that catalyzes the adenylation of sulfate producing adenosine 5'-phosphosulfate (APS) and diphosphate, the first enzymatic step in sulfur assimilation pathway. APS synthesis involves the formation of a high-energy phosphoric-sulfuric acid anhydride bond driven by GTP hydrolysis by CysN coupled to ATP hydrolysis by CysD. This is Sulfate adenylyltransferase subunit 1 from Bacteroides fragilis (strain YCH46).